Reading from the N-terminus, the 319-residue chain is ADP-L-glycero-D-manno-heptose-6-epimerase (319 aa).

NADP(+)-binding positions include Phe10–Ile11, Asp31–Asp32, Lys38, Lys53, and Glu75–Ser79. Tyr139 acts as the Proton acceptor in catalysis. Lys143 lines the NADP(+) pocket. Residue Asn168 coordinates substrate. Val169 and Lys177 together coordinate NADP(+). Residue Lys177 is the Proton acceptor of the active site. Residues Ser179, His186, Phe200–Ala203, Arg213, and Tyr281 contribute to the substrate site.

Belongs to the NAD(P)-dependent epimerase/dehydratase family. HldD subfamily. As to quaternary structure, homopentamer. NADP(+) serves as cofactor.

It carries out the reaction ADP-D-glycero-beta-D-manno-heptose = ADP-L-glycero-beta-D-manno-heptose. It functions in the pathway nucleotide-sugar biosynthesis; ADP-L-glycero-beta-D-manno-heptose biosynthesis; ADP-L-glycero-beta-D-manno-heptose from D-glycero-beta-D-manno-heptose 7-phosphate: step 4/4. Its function is as follows. Catalyzes the interconversion between ADP-D-glycero-beta-D-manno-heptose and ADP-L-glycero-beta-D-manno-heptose via an epimerization at carbon 6 of the heptose. This chain is ADP-L-glycero-D-manno-heptose-6-epimerase, found in Aromatoleum aromaticum (strain DSM 19018 / LMG 30748 / EbN1) (Azoarcus sp. (strain EbN1)).